Consider the following 83-residue polypeptide: Small ribosomal subunit protein bS16 (83 aa).

This sequence belongs to the bacterial ribosomal protein bS16 family.

The sequence is that of Small ribosomal subunit protein bS16 from Azoarcus sp. (strain BH72).